We begin with the raw amino-acid sequence, 359 residues long: Heat-inducible transcription repressor HrcA (359 aa).

It belongs to the HrcA family.

Negative regulator of class I heat shock genes (grpE-dnaK-dnaJ and groELS operons). Prevents heat-shock induction of these operons. This Rhizobium meliloti (strain 1021) (Ensifer meliloti) protein is Heat-inducible transcription repressor HrcA.